Reading from the N-terminus, the 495-residue chain is Glutelin type-B 2 (495 aa).

Positions 1-24 (MATTIFSRFSIYFCAMLLCQGSMA) are cleaved as a signal peptide. 2 disulfide bridges follow: C45–C78 and C121–C305. Cupin type-1 domains follow at residues 50-245 (LQAF…VAAK) and 311-460 (VNIE…EQAR). A disordered region spans residues 464 to 495 (NNRGEEHGAFTPRFQQQYYPGFSNESESETSE).

This sequence belongs to the 11S seed storage protein (globulins) family. Hexamer; each subunit is composed of an acidic and a basic chain derived from a single precursor and linked by a disulfide bond.

Functionally, seed storage protein. This is Glutelin type-B 2 (GLUB2) from Oryza sativa subsp. japonica (Rice).